Consider the following 303-residue polypeptide: Recombination-associated protein RdgC (303 aa).

Belongs to the RdgC family.

Its subcellular location is the cytoplasm. The protein resides in the nucleoid. In terms of biological role, may be involved in recombination. This Shewanella loihica (strain ATCC BAA-1088 / PV-4) protein is Recombination-associated protein RdgC.